The chain runs to 153 residues: Ribosome maturation factor RimP (153 aa).

The protein belongs to the RimP family.

Its subcellular location is the cytoplasm. Functionally, required for maturation of 30S ribosomal subunits. The protein is Ribosome maturation factor RimP of Burkholderia mallei (strain NCTC 10229).